The chain runs to 878 residues: MKHLTSAEVRQMFLDFFKEKGHAVEPSASLVPHEDPSLLWINSGVATLKKYFDGRVVPENPRIVNAQKAIRTNDIENVGKTARHHTFFEMLGNFSIGDYFKEEAITWAWEFLTSDKWIGFDKELLSVTVHPEDEEAYEFWAKKIGIPEERIIRLEGNFWDIGEGPSGPNTEIFYDRGEAYGNDPEDPELYPGGENDRYLEVWNLVFSEFNHNPDGTYTPLPKKNIDTGMGLERMVSVIQNVPTNFDTDLFVPIIKATESISGETYGKDNVKDTAFKVIADHIRTVAFAVSDGALPSNEGRGYVLRRLLRRAVRYAKTINIHRPFMFDLVPVVAEIMADFYPEVKEKADFIAKVIKTEEERFHETLNEGLAILSEMIKKEKDKGSSVISGADVFKLYDTYGFPVELTEEYAEDENMTVDHEGFEEEMNQQRERARNARQDVGSMQVQGGALRDVTVESTFVGYSQTKADANIIVLLQDGQLIEEAHEGESVQIILDETPFYAESGGQIGDKGYLRSEQAVVRIKDVQKAPNGQHVHEGVVESGTVQKGLHVTAEVEDHMRSGVIKNHTATHLLHQALKDVLGTHVNQAGSLVTENRLRFDFSHFGQVTKEELEQIERIVNEKIWASIPVSIDLKPIAEAKEMGAMALFGEKYGDIVRVVQVGDYSLELCGGCHVRNTAEIGLFKIVSESGIGAGTRRIEAVTGQGAYVEMNSQISVLKQTADELKTNIKEVPKRVAALQAELKDAQRENESLLAKLGNVEAGAILSKVKEVDGVNVLAAKVNAKDMNHLRTMVDELKAKLGSAVIVLGAVQNDKVNISAGVTKDLIEKGLHAGKLVKQAAEVCGGGGGGRPDMAQAGGKQPEKLEEALASVEDWVKSVL.

Zn(2+) is bound by residues His-566, His-570, Cys-668, and His-672.

This sequence belongs to the class-II aminoacyl-tRNA synthetase family. Zn(2+) is required as a cofactor.

The protein resides in the cytoplasm. The enzyme catalyses tRNA(Ala) + L-alanine + ATP = L-alanyl-tRNA(Ala) + AMP + diphosphate. In terms of biological role, catalyzes the attachment of alanine to tRNA(Ala) in a two-step reaction: alanine is first activated by ATP to form Ala-AMP and then transferred to the acceptor end of tRNA(Ala). Also edits incorrectly charged Ser-tRNA(Ala) and Gly-tRNA(Ala) via its editing domain. This Bacillus subtilis (strain 168) protein is Alanine--tRNA ligase.